A 161-amino-acid chain; its full sequence is ATP synthase subunit b 1 (161 aa).

The chain crosses the membrane as a helical span at residues F3–L23.

Belongs to the ATPase B chain family. In terms of assembly, F-type ATPases have 2 components, F(1) - the catalytic core - and F(0) - the membrane proton channel. F(1) has five subunits: alpha(3), beta(3), gamma(1), delta(1), epsilon(1). F(0) has three main subunits: a(1), b(2) and c(10-14). The alpha and beta chains form an alternating ring which encloses part of the gamma chain. F(1) is attached to F(0) by a central stalk formed by the gamma and epsilon chains, while a peripheral stalk is formed by the delta and b chains.

The protein localises to the cell inner membrane. In terms of biological role, f(1)F(0) ATP synthase produces ATP from ADP in the presence of a proton or sodium gradient. F-type ATPases consist of two structural domains, F(1) containing the extramembraneous catalytic core and F(0) containing the membrane proton channel, linked together by a central stalk and a peripheral stalk. During catalysis, ATP synthesis in the catalytic domain of F(1) is coupled via a rotary mechanism of the central stalk subunits to proton translocation. Functionally, component of the F(0) channel, it forms part of the peripheral stalk, linking F(1) to F(0). The protein is ATP synthase subunit b 1 of Agrobacterium fabrum (strain C58 / ATCC 33970) (Agrobacterium tumefaciens (strain C58)).